A 276-amino-acid polypeptide reads, in one-letter code: 2,3,4,5-tetrahydropyridine-2,6-dicarboxylate N-succinyltransferase (276 aa).

Substrate-binding residues include Arg100 and Asp137.

It belongs to the transferase hexapeptide repeat family. Homotrimer.

Its subcellular location is the cytoplasm. It catalyses the reaction (S)-2,3,4,5-tetrahydrodipicolinate + succinyl-CoA + H2O = (S)-2-succinylamino-6-oxoheptanedioate + CoA. It functions in the pathway amino-acid biosynthesis; L-lysine biosynthesis via DAP pathway; LL-2,6-diaminopimelate from (S)-tetrahydrodipicolinate (succinylase route): step 1/3. The polypeptide is 2,3,4,5-tetrahydropyridine-2,6-dicarboxylate N-succinyltransferase (Zymomonas mobilis subsp. mobilis (strain ATCC 31821 / ZM4 / CP4)).